Here is a 362-residue protein sequence, read N- to C-terminus: Small ribosomal subunit protein uS4m (362 aa).

The S4 RNA-binding domain maps to 105-179; the sequence is TRFDVILLRL…FYKEILVEKI (75 aa).

Belongs to the universal ribosomal protein uS4 family. Component of the mitochondrial ribosome small subunit.

Its subcellular location is the mitochondrion. The protein is Small ribosomal subunit protein uS4m (RPS4) of Arabidopsis thaliana (Mouse-ear cress).